Consider the following 300-residue polypeptide: MAKPLSISSHPSVHLAWRAYFEMTKPKVVALMLLTVLVGMCLAMPTILPVKPLVAGLLGIAMMAGSAAALNHLIDRRIDGMMARTYNRPLPKGRVSARRALLFAALLGSLGFVILYVFTNPLTAWLTFASLIGYALIYTAYLKRATPQNIVIGGLAGAMPPLLGWTAVTNQFHGHALLLVIIIFLWTPPHFWALAIHRRAEYAKVDIPMLPVTHGVEFTKTCILLYTILLAIACLLPVLVGMSGPLYFVCSSLLSTGFIYKAWQLKYQDSEGLAMQVFRFSIYHLMLLFMALLLDHYLWA.

9 consecutive transmembrane segments (helical) span residues 28–48 (VVALMLLTVLVGMCLAMPTIL), 54–74 (VAGLLGIAMMAGSAAALNHLI), 100–120 (ALLFAALLGSLGFVILYVFTN), 122–142 (LTAWLTFASLIGYALIYTAYL), 149–169 (NIVIGGLAGAMPPLLGWTAVT), 176–196 (ALLLVIIIFLWTPPHFWALAI), 222–242 (CILLYTILLAIACLLPVLVGM), 243–263 (SGPLYFVCSSLLSTGFIYKAW), and 280–300 (FSIYHLMLLFMALLLDHYLWA).

This sequence belongs to the UbiA prenyltransferase family. Protoheme IX farnesyltransferase subfamily.

It localises to the cell inner membrane. It catalyses the reaction heme b + (2E,6E)-farnesyl diphosphate + H2O = Fe(II)-heme o + diphosphate. It participates in porphyrin-containing compound metabolism; heme O biosynthesis; heme O from protoheme: step 1/1. In terms of biological role, converts heme B (protoheme IX) to heme O by substitution of the vinyl group on carbon 2 of heme B porphyrin ring with a hydroxyethyl farnesyl side group. The chain is Protoheme IX farnesyltransferase 1 from Shewanella sp. (strain MR-4).